Consider the following 320-residue polypeptide: Geranylgeranyl pyrophosphate synthase (320 aa).

Residues K35, R38, and H67 each coordinate isopentenyl diphosphate. The Mg(2+) site is built by D74 and D78. A dimethylallyl diphosphate-binding site is contributed by R83. R84 lines the isopentenyl diphosphate pocket. 5 residues coordinate dimethylallyl diphosphate: K168, T169, Q206, K223, and K233.

The protein belongs to the FPP/GGPP synthase family. Mg(2+) serves as cofactor.

Its subcellular location is the cytoplasm. The enzyme catalyses isopentenyl diphosphate + dimethylallyl diphosphate = (2E)-geranyl diphosphate + diphosphate. It catalyses the reaction isopentenyl diphosphate + (2E)-geranyl diphosphate = (2E,6E)-farnesyl diphosphate + diphosphate. The catalysed reaction is isopentenyl diphosphate + (2E,6E)-farnesyl diphosphate = (2E,6E,10E)-geranylgeranyl diphosphate + diphosphate. Its pathway is isoprenoid biosynthesis; farnesyl diphosphate biosynthesis; farnesyl diphosphate from geranyl diphosphate and isopentenyl diphosphate: step 1/1. It participates in isoprenoid biosynthesis; geranyl diphosphate biosynthesis; geranyl diphosphate from dimethylallyl diphosphate and isopentenyl diphosphate: step 1/1. It functions in the pathway isoprenoid biosynthesis; geranylgeranyl diphosphate biosynthesis; geranylgeranyl diphosphate from farnesyl diphosphate and isopentenyl diphosphate: step 1/1. Its function is as follows. Catalyzes the trans-addition of the 3 molecules of IPP onto DMAPP to form geranylgeranyl pyrophosphate. May be involved in vesicle trafficking and protein sorting. The polypeptide is Geranylgeranyl pyrophosphate synthase (BTS1) (Eremothecium gossypii (strain ATCC 10895 / CBS 109.51 / FGSC 9923 / NRRL Y-1056) (Yeast)).